Here is a 394-residue protein sequence, read N- to C-terminus: MGCLGNSKTEDQRNEEKAQREANKKIEKQLQKDKQVYRATHRLLLLGAGESGKSTIVKQMRILHVNGFNGEGGEEDPQAARSNSDGEKATKVQDIKNNLKEAIETIVAAMSNLVPPVELANPENQFRVDYILSVMNVPDFDFPPEFYEHAKALWEDEGVRACYERSNEYQLIDCAQYFLDKIDVIKQADYVPSDQDLLRCRVLTSGIFETKFQVDKVNFHMFDVGGQRDERRKWIQCFNDVTAIIFVVASSSYNMVIREDNQTNRLQEALNLFKSIWNNRWLRTISVILFLNKQDLLAEKVLAGKSKIEDYFPEFARYTTPEDATPEPGEDPRVTRAKYFIRDEFLRISTASGDGRHYCYPHFTCAVDTENIRRVFNDCRDIIQRMHLRQYELL.

A disordered region spans residues 1 to 23; the sequence is MGCLGNSKTEDQRNEEKAQREAN. Residue glycine 2 is the site of N-palmitoyl glycine attachment. Residue cysteine 3 is the site of S-palmitoyl cysteine attachment. Residues 8–23 show a composition bias toward basic and acidic residues; it reads KTEDQRNEEKAQREAN. The G-alpha domain maps to 39–394; that stretch reads ATHRLLLLGA…RMHLRQYELL (356 aa). Residues 42 to 55 form a G1 motif region; that stretch reads RLLLLGAGESGKST. Position 47 to 55 (47 to 55) interacts with GTP; that stretch reads GAGESGKST. Residue serine 54 participates in Mg(2+) binding. Residues 68–91 form a disordered region; the sequence is FNGEGGEEDPQAARSNSDGEKATK. The tract at residues 196–204 is G2 motif; it reads DLLRCRVLT. Residues 197–204, 223–227, 292–295, and alanine 366 each bind GTP; these read LLRCRVLT, DVGGQ, and NKQD. A Mg(2+)-binding site is contributed by threonine 204. The interval 219–228 is G3 motif; sequence FHMFDVGGQR. Residues 288-295 form a G4 motif region; the sequence is ILFLNKQD. A G5 motif region spans residues 364-369; the sequence is TCAVDT.

It belongs to the G-alpha family. G(s) subfamily. Heterotrimeric G proteins are composed of 3 units; alpha, beta and gamma. The alpha chain contains the guanine nucleotide binding site. Interacts with CRY1; the interaction may block GPCR-mediated regulation of cAMP concentrations. Interacts with ADCY6 and stimulates its adenylyl cyclase activity. Interacts with ADCY2 and ADCY5. Stimulates the ADCY5 adenylyl cyclase activity. Interaction with SASH1.

The protein resides in the cell membrane. Functionally, guanine nucleotide-binding proteins (G proteins) function as transducers in numerous signaling pathways controlled by G protein-coupled receptors (GPCRs). Signaling involves the activation of adenylyl cyclases, resulting in increased levels of the signaling molecule cAMP. GNAS functions downstream of several GPCRs, including beta-adrenergic receptors. Stimulates the Ras signaling pathway via RAPGEF2. The chain is Guanine nucleotide-binding protein G(s) subunit alpha (GNAS) from Canis lupus familiaris (Dog).